The following is a 227-amino-acid chain: uncharacterized protein (227 aa).

Positions 1–25 are cleaved as a signal peptide; sequence MLIMKKLLLIAATSATMLSSSVSFA.

It to R.conorii RC1281.

This is an uncharacterized protein from Rickettsia conorii (strain ATCC VR-613 / Malish 7).